The sequence spans 242 residues: Ribonuclease 3 (242 aa).

An RNase III domain is found at 14–142; sequence LRRFAARFAL…VIGALYLSTG (129 aa). Position 56 (E56) interacts with Mg(2+). The active site involves D60. Mg(2+) contacts are provided by D128 and E131. The active site involves E131. The DRBM domain occupies 170–235; the sequence is NHKSALQELT…ARGAYAALRS (66 aa).

The protein belongs to the ribonuclease III family. As to quaternary structure, homodimer. It depends on Mg(2+) as a cofactor.

It is found in the cytoplasm. It carries out the reaction Endonucleolytic cleavage to 5'-phosphomonoester.. Digests double-stranded RNA. Involved in the processing of primary rRNA transcript to yield the immediate precursors to the large and small rRNAs (23S and 16S). Processes some mRNAs, and tRNAs when they are encoded in the rRNA operon. Processes pre-crRNA and tracrRNA of type II CRISPR loci if present in the organism. In Gloeobacter violaceus (strain ATCC 29082 / PCC 7421), this protein is Ribonuclease 3.